A 230-amino-acid chain; its full sequence is Ribonuclease 3 (230 aa).

Positions 10–133 (DPRLLSRIGY…IIGAIYLDSS (124 aa)) constitute an RNase III domain. Glu46 is a binding site for Mg(2+). The active site involves Asp50. Asp119 and Glu122 together coordinate Mg(2+). Residue Glu122 is part of the active site. In terms of domain architecture, DRBM spans 161-230 (DPKSRLQEYL…AAEILKLLEQ (70 aa)).

It belongs to the ribonuclease III family. Homodimer. Mg(2+) is required as a cofactor.

The protein localises to the cytoplasm. The catalysed reaction is Endonucleolytic cleavage to 5'-phosphomonoester.. Functionally, digests double-stranded RNA. Involved in the processing of primary rRNA transcript to yield the immediate precursors to the large and small rRNAs (23S and 16S). Processes some mRNAs, and tRNAs when they are encoded in the rRNA operon. Processes pre-crRNA and tracrRNA of type II CRISPR loci if present in the organism. This is Ribonuclease 3 (rnc) from Acinetobacter baumannii (strain AB307-0294).